The chain runs to 231 residues: Small ribosomal subunit protein uS3 (231 aa).

One can recognise a KH type-2 domain in the interval 17–86; that stretch reads VEQYLNKELK…SPQVEVQQVA (70 aa).

This sequence belongs to the universal ribosomal protein uS3 family. In terms of assembly, part of the 30S ribosomal subunit.

Its function is as follows. Binds the lower part of the 30S subunit head. This is Small ribosomal subunit protein uS3 from Methanocorpusculum labreanum (strain ATCC 43576 / DSM 4855 / Z).